An 891-amino-acid chain; its full sequence is Valine--tRNA ligase (891 aa).

The 'HIGH' region signature appears at 43-53 (PFTSGTLHLGH). Residues 536–540 (KMSKS) carry the 'KMSKS' region motif. Lys539 contacts ATP.

This sequence belongs to the class-I aminoacyl-tRNA synthetase family. ValS type 2 subfamily.

The protein resides in the cytoplasm. The catalysed reaction is tRNA(Val) + L-valine + ATP = L-valyl-tRNA(Val) + AMP + diphosphate. Functionally, catalyzes the attachment of valine to tRNA(Val). As ValRS can inadvertently accommodate and process structurally similar amino acids such as threonine, to avoid such errors, it has a 'posttransfer' editing activity that hydrolyzes mischarged Thr-tRNA(Val) in a tRNA-dependent manner. The protein is Valine--tRNA ligase of Pyrococcus horikoshii (strain ATCC 700860 / DSM 12428 / JCM 9974 / NBRC 100139 / OT-3).